The following is a 230-amino-acid chain: Ribonuclease HII (230 aa).

The 190-residue stretch at 28 to 217 folds into the RNase H type-2 domain; that stretch reads FRIAGIDEAG…VKEHLPSQPD (190 aa). A divalent metal cation contacts are provided by Asp34, Glu35, and Asp126. Residues 209–230 are disordered; sequence KEHLPSQPDSDTAGPSTGLFSF. Over residues 215-230 the composition is skewed to polar residues; sequence QPDSDTAGPSTGLFSF.

It belongs to the RNase HII family. It depends on Mn(2+) as a cofactor. Mg(2+) is required as a cofactor.

The protein localises to the cytoplasm. It catalyses the reaction Endonucleolytic cleavage to 5'-phosphomonoester.. In terms of biological role, endonuclease that specifically degrades the RNA of RNA-DNA hybrids. In Citrifermentans bemidjiense (strain ATCC BAA-1014 / DSM 16622 / JCM 12645 / Bem) (Geobacter bemidjiensis), this protein is Ribonuclease HII.